A 240-amino-acid polypeptide reads, in one-letter code: Type II restriction enzyme DdeI (240 aa).

The enzyme catalyses Endonucleolytic cleavage of DNA to give specific double-stranded fragments with terminal 5'-phosphates.. Functionally, a P subtype restriction enzyme that recognizes the double-stranded sequence 5'-CTNAG-3' and cleaves after C-1. This is Type II restriction enzyme DdeI (ddeIR) from Desulfomicrobium norvegicum (strain DSM 1741 / NCIMB 8310) (Desulfovibrio baculatus (strain Norway 4)).